Here is a 475-residue protein sequence, read N- to C-terminus: Peripherin (475 aa).

The tract at residues methionine 1–serine 42 is disordered. The head stretch occupies residues methionine 1–glutamine 103. The span at glycine 14 to arginine 26 shows a compositional bias: low complexity. 3'-nitrotyrosine is present on tyrosine 24. 2 positions are modified to phosphoserine: serine 35 and serine 57. Serine 66 is subject to Phosphoserine; by PKB/AKT1. The IF rod domain occupies glutamate 101–isoleucine 411. The segment at glutamate 104–alanine 136 is coil 1A. The tract at residues arginine 137–leucine 147 is linker 1. The interval cysteine 148–leucine 243 is coil 1B. Positions glutamine 244–threonine 266 are linker 2. Residues alanine 267 to serine 409 form a coil 2 region. Residue tyrosine 383 is modified to 3'-nitrotyrosine. Positions arginine 410 to tyrosine 475 are tail. The interval glutamate 453–tyrosine 475 is disordered. Tyrosine 475 carries the post-translational modification Phosphotyrosine.

The protein belongs to the intermediate filament family. Forms homodimers (in vitro). Homopolymerizes into a filamentous network (in vitro). Forms heterodimers with NEFL, NEFM or NEFH (in vitro). Interacts with DST (via C-terminus). Interacts with RAB7A; the interaction is direct. Interacts with PRKCE (via phorbol-ester/DAG-type 2 domain). Post-translationally, phosphorylated; phosphorylation increases after nerve injury in regenerating neurons. In terms of tissue distribution, expressed in the sciatic nerve and at very low levels in the central nervous system (at protein level). Expressed in the spinal cord, in the sciatic nerve at the level of the dorsal root ganglion and in trigeminal nerves (at protein level). Expressed in the cranial nerves in the hindbrain, including the sensory and motor trigeminal neurons, the mesencephalic trigeminal neurons, the spinal trigeminal neurons, and in the facial nerve (at protein level). Expressed in the cerebellum, with expression in the inferior cerebellar peduncle and the lateral deep cerebellar nucleus (at protein level). Expressed in vestibulocochlear neurons, such as the anteroventral cochlear nucleus, the dorsal cochlear nucleus, the superficial granule cell layer and the granule cell lamina (at protein level). Expressed in glossopharyngeal, vagal and hypoglossal neurons (at protein level). Expressed in peripheral sensory neurons, in the dorsal root ganglia and the spinal cord, and to a lower extent in motor neurons. Expressed in the optic tract of the central nervous system, especially in the lateral geniculate nucleus and the superior colliculus. Expressed in neurons of the pineal stalk in the cortex. Expressed in the spinal trigeminal tract of the midbrain, in the medulla and in the medial cerebellar peduncle.

The protein resides in the cytoplasm. It is found in the cytoskeleton. It localises to the cell projection. Its subcellular location is the axon. The protein localises to the perikaryon. Functionally, class-III neuronal intermediate filament protein. May form an independent structural network without the involvement of other neurofilaments or may cooperate with the neuronal intermediate filament proteins NEFL, NEFH, NEFM and INA to form filamentous networks. Assembly of the neuronal intermediate filaments may be regulated by RAB7A. Plays a role in the development of unmyelinated sensory neurons. May be involved in axon elongation and axon regeneration after injury. Inhibits neurite extension in type II spiral ganglion neurons in the cochlea. This chain is Peripherin (Prph), found in Mus musculus (Mouse).